Consider the following 79-residue polypeptide: MADAGARRPFFRRRKTCPFTGSNAPKIDFKDSKLLMRYVSERGKIVPSRITAVSALKQRELARAIKRARFLGLLPYVIR.

It belongs to the bacterial ribosomal protein bS18 family. As to quaternary structure, part of the 30S ribosomal subunit. Forms a tight heterodimer with protein bS6.

Functionally, binds as a heterodimer with protein bS6 to the central domain of the 16S rRNA, where it helps stabilize the platform of the 30S subunit. The sequence is that of Small ribosomal subunit protein bS18 from Afipia carboxidovorans (strain ATCC 49405 / DSM 1227 / KCTC 32145 / OM5) (Oligotropha carboxidovorans).